Reading from the N-terminus, the 210-residue chain is Ras-related protein Rab-2-B (210 aa).

13–21 (GDTGVGKSC) contributes to the GTP binding site. The Effector region motif lies at 35–43 (HDLTIGVEF). Residues 61 to 65 (DTAGQ), 119 to 122 (NKCD), and 149 to 151 (SAK) contribute to the GTP site. 2 S-geranylgeranyl cysteine lipidation sites follow: C208 and C209.

The protein belongs to the small GTPase superfamily. Rab family.

It localises to the endoplasmic reticulum membrane. Its subcellular location is the golgi apparatus membrane. Functionally, protein transport. Probably involved in vesicular traffic. The sequence is that of Ras-related protein Rab-2-B (RAB2B) from Zea mays (Maize).